Consider the following 24-residue polypeptide: Brevinin-1Pc (24 aa).

Residues cysteine 18 and cysteine 24 are joined by a disulfide bond.

As to expression, expressed by the skin glands.

It is found in the secreted. Functionally, antibacterial activity against Gram-positive bacterium S.aureus and Gram-negative bacterium E.coli. Has activity against C.albicans. The polypeptide is Brevinin-1Pc (Lithobates pipiens (Northern leopard frog)).